The primary structure comprises 443 residues: F-box/LRR-repeat protein At2g42720 (443 aa).

Residues 1 to 47 form the F-box domain; it reads MDRISSLPDEILEHILSFLSTKEAALTSSLSTRWKNVFVFVPSLHLD. LRR repeat units follow at residues 139–167, 169–194, 201–236, 271–296, 323–348, and 363–389; these read KLRLGRGFTIKLCHENVYLPMLKTLCLDT, DFDGDHNVFETLLPRCPLLEELVLED, CGSVSSPSLKRLRIRFFHIPIISLDVPGLVYLELSC, SSHLVPADMMDLITGIRKVKVLHLTS, DKKQGWQILPLLIKNSPNLETLVFKG, and CSGILGKSSSCLSSSRVKVLEIWSYQG.

This chain is F-box/LRR-repeat protein At2g42720, found in Arabidopsis thaliana (Mouse-ear cress).